Here is a 427-residue protein sequence, read N- to C-terminus: Peptidase B (427 aa).

Residues Lys-195 and Asp-200 each contribute to the Mn(2+) site. Residue Lys-207 is part of the active site. Asp-218, Asp-277, and Glu-279 together coordinate Mn(2+). The active site involves Arg-281.

It belongs to the peptidase M17 family. Homohexamer. Mn(2+) is required as a cofactor.

It is found in the cytoplasm. The catalysed reaction is Release of an N-terminal amino acid, Xaa, from a peptide or arylamide. Xaa is preferably Glu or Asp but may be other amino acids, including Leu, Met, His, Cys and Gln.. Functionally, probably plays an important role in intracellular peptide degradation. This is Peptidase B from Escherichia coli O7:K1 (strain IAI39 / ExPEC).